We begin with the raw amino-acid sequence, 524 residues long: uncharacterized protein (524 aa).

An N-terminal signal peptide occupies residues 1–26; that stretch reads MLKIDMWFKLKSLGFSLISLQALLAS. Residue Cys27 is the site of N-palmitoyl cysteine attachment. A lipid anchor (S-diacylglycerol cysteine) is attached at Cys27. The disordered stretch occupies residues 37–68; that stretch reads IEEKNDSTTDNNATPFKDEQSDQGTEVNQQPK. Residues 58 to 68 show a composition bias toward polar residues; sequence DQGTEVNQQPK.

Belongs to the MG067/MG068/MG395 family.

The protein resides in the cell membrane. This is an uncharacterized protein from Mycoplasma genitalium (strain ATCC 33530 / DSM 19775 / NCTC 10195 / G37) (Mycoplasmoides genitalium).